The following is a 371-amino-acid chain: MSL complex subunit 3B (371 aa).

Disordered stretches follow at residues Met-1–Asp-44 and Glu-160–Ala-229. Basic and acidic residues predominate over residues Pro-8–Asp-44. Residues Asp-44–Pro-367 enclose the MRG domain. Positions Ala-206–His-216 are enriched in basic residues.

It is found in the nucleus. Functionally, probable non-catalytic component of the MSL histone acetyltransferase complex, a multiprotein complex that mediates the majority of histone H4 acetylation at 'Lys-16' (H4K16ac), an epigenetic mark that prevents chromatin compaction. In Rattus norvegicus (Rat), this protein is MSL complex subunit 3B.